The following is a 297-amino-acid chain: MSEMESDILRAGWEAWRRNPVTAVPFVLHGLSVIAVSIATLLSAIYAIMPELPAAILSGDFGDEAFKQMFGEFLKRCLGNIELLGVTFVFGLVIVAALAALFKAWWIKLCYDALEGKAILSTAFHHAKSLFVPLFKFELILTLLIGIAFIPLINLGLDFFRNIHMLTKEAALYYVISFMIWSAFLGIFAITIQFLFTFVPYAIVIDLKGTLSGIRRGVMVLRHNLVDTIIMWLLVGLAGMALQVAAYPFRFFGFWGTLAGTLVAVILGWVAVMPITTCWWVELYRRRSKTLNSFPNG.

Transmembrane regions (helical) follow at residues 26–48, 80–102, 134–156, 185–205, 225–247, and 262–284; these read FVLH…IYAI, NIEL…AALF, LFKF…INLG, LGIF…AIVI, LVDT…VAAY, and LVAV…VELY.

Its subcellular location is the cell membrane. This is an uncharacterized protein from Archaeoglobus fulgidus (strain ATCC 49558 / DSM 4304 / JCM 9628 / NBRC 100126 / VC-16).